We begin with the raw amino-acid sequence, 566 residues long: Transmembrane protein 151B (566 aa).

The segment covering 1–11 (MSPPGSAAGES) has biased composition (low complexity). Residues 1–25 (MSPPGSAAGESAAGGGGGGGGPGVS) form a disordered region. Residues 12–23 (AAGGGGGGGGPG) show a composition bias toward gly residues. A run of 2 helical transmembrane segments spans residues 65–85 (CLLLSLLMYGCLGAVAWCHVT) and 112–132 (YVYIPLAFLLMLYAVYLVECW). Over residues 495 to 512 (VNEASCPTEQTRLSSQAS) the composition is skewed to polar residues. The interval 495 to 529 (VNEASCPTEQTRLSSQASMGDDEDDDEEEAGPPPP) is disordered. Residues 514–524 (GDDEDDDEEEA) show a composition bias toward acidic residues.

It belongs to the TMEM151 family.

It localises to the membrane. This chain is Transmembrane protein 151B (TMEM151B), found in Homo sapiens (Human).